The primary structure comprises 461 residues: CBL-interacting protein kinase 5 (461 aa).

The Protein kinase domain maps to 12–266 (YELGRMLGQG…VEKLVEHPWF (255 aa)). ATP contacts are provided by residues 18–26 (LGQGTFAKV) and Lys41. Catalysis depends on Asp134, which acts as the Proton acceptor. Residues 152–181 (DFGLSAFKECQKQDGLLHTTCGTPAYVAPE) form an activation loop region. The region spanning 300–334 (EGKAKEPASSLKPVSLNAFDIISLSKGFDLSGLFE) is the NAF domain. The interval 340-369 (KADSRFMTQKPASAIVSKLEQIAETESFKV) is PPI. The interval 440–461 (HPSLAQSSTLTQSSKSISRHAI) is disordered. Residues 442-455 (SLAQSSTLTQSSKS) are compositionally biased toward low complexity.

This sequence belongs to the protein kinase superfamily. CAMK Ser/Thr protein kinase family. SNF1 subfamily. Mn(2+) serves as cofactor.

It carries out the reaction L-seryl-[protein] + ATP = O-phospho-L-seryl-[protein] + ADP + H(+). The catalysed reaction is L-threonyl-[protein] + ATP = O-phospho-L-threonyl-[protein] + ADP + H(+). Its function is as follows. CIPK serine-threonine protein kinases interact with CBL proteins. Binding of a CBL protein to the regulatory NAF domain of CIPK protein lead to the activation of the kinase in a calcium-dependent manner. This is CBL-interacting protein kinase 5 (CIPK5) from Oryza sativa subsp. japonica (Rice).